The chain runs to 142 residues: DNA-directed RNA polymerases I and III subunit RPAC2 (142 aa).

A compositionally biased stretch (basic and acidic residues) spans 1–11 (MTEDIEQKKTA). The interval 1-45 (MTEDIEQKKTATEVTPQEPKHIQEEEEQDVDMTGDEEQEEEPDRE) is disordered. 2 positions are modified to phosphothreonine: T15 and T33. The segment covering 24–42 (EEEEQDVDMTGDEEQEEEP) has biased composition (acidic residues). Residue K134 forms a Glycyl lysine isopeptide (Lys-Gly) (interchain with G-Cter in ubiquitin) linkage.

Belongs to the archaeal Rpo11/eukaryotic RPB11/RPC19 RNA polymerase subunit family. In terms of assembly, component of the RNA polymerase I (Pol I) and RNA polymerase III (Pol III) complexes. Component of the RNA polymerase I (Pol I) complex consisting of 14 subunits: RPA135, RPA190, RPC40, RPA14, RPB5, RPO26, RPA43, RPB8, RPA12, RPB10, RPC19, RPC10, RPA49 and RPA34. The complex is composed of a horseshoe-shaped core containing ten subunits (RPA135, RPA190, RPB5, RPO26, RPB8, RPB10, RPC10, RPA12, RPC19 and RPC40) where RPA135 and RPA190 form the DNA-binding cleft. Outside of the core, RPA14 and RPA43 form the stalk that mediates interactions with transcription initiation factors and newly synthesized RNA. Component of the RNA polymerase III (Pol III) complex consisting of 17 subunits. Directly interacts with the RPC40 subunit.

The protein localises to the nucleus. It localises to the nucleolus. In terms of biological role, DNA-dependent RNA polymerases catalyze the transcription of DNA into RNA using the four ribonucleoside triphosphates as substrates. Common core component of RNA polymerases I and III which synthesize ribosomal RNA precursors and small RNAs, such as 5S rRNA and tRNAs, respectively. The polypeptide is DNA-directed RNA polymerases I and III subunit RPAC2 (RPC19) (Saccharomyces cerevisiae (strain ATCC 204508 / S288c) (Baker's yeast)).